A 632-amino-acid chain; its full sequence is Signal-transduction and transcriptional-control protein (632 aa).

The 74-residue stretch at 197–270 (TYQYLNKITD…GQSYEDEEIM (74 aa)) folds into the PAS domain. One can recognise a Sigma-54 factor interaction domain in the interval 324-554 (IIGQSEAMKR…LENCIENIVN (231 aa)). ATP-binding positions include 352-359 (GESGTGKE) and 416-425 (ANEGTLFLDE). Residues 606 to 625 (ISKACRILGINRSTLYIKIK) constitute a DNA-binding region (H-T-H motif).

The polypeptide is Signal-transduction and transcriptional-control protein (stc) (Clostridium beijerinckii (Clostridium MP)).